Reading from the N-terminus, the 594-residue chain is ATP-dependent lipid A-core flippase (594 aa).

6 helical membrane-spanning segments follow: residues 35-55 (FVLA…IPKV), 64-84 (FGGS…GVAL), 135-155 (AVIF…ITLV), 161-181 (VVAL…VVAV), 262-282 (VTAF…MIQA), and 289-309 (IGGF…LKHL). One can recognise an ABC transmembrane type-1 domain in the interval 36–318 (VLAIIAMGLV…LADLNQPLQR (283 aa)). The 239-residue stretch at 350–588 (LVFDNVGFRY…NGLYAGLHRI (239 aa)) folds into the ABC transporter domain. ATP is bound at residue 384-391 (GPSGSGKT).

The protein belongs to the ABC transporter superfamily. Lipid exporter (TC 3.A.1.106) family. As to quaternary structure, homodimer.

The protein localises to the cell inner membrane. It catalyses the reaction ATP + H2O + lipid A-core oligosaccharideSide 1 = ADP + phosphate + lipid A-core oligosaccharideSide 2.. Involved in lipopolysaccharide (LPS) biosynthesis. Translocates lipid A-core from the inner to the outer leaflet of the inner membrane. Transmembrane domains (TMD) form a pore in the inner membrane and the ATP-binding domain (NBD) is responsible for energy generation. This is ATP-dependent lipid A-core flippase from Cupriavidus metallidurans (strain ATCC 43123 / DSM 2839 / NBRC 102507 / CH34) (Ralstonia metallidurans).